A 279-amino-acid chain; its full sequence is 1D-myo-inositol 2-acetamido-2-deoxy-alpha-D-glucopyranoside deacetylase (279 aa).

Residues histidine 12, aspartate 15, and histidine 146 each coordinate Zn(2+).

The protein belongs to the MshB deacetylase family. It depends on Zn(2+) as a cofactor.

It carries out the reaction 1D-myo-inositol 2-acetamido-2-deoxy-alpha-D-glucopyranoside + H2O = 1D-myo-inositol 2-amino-2-deoxy-alpha-D-glucopyranoside + acetate. Functionally, catalyzes the deacetylation of 1D-myo-inositol 2-acetamido-2-deoxy-alpha-D-glucopyranoside (GlcNAc-Ins) in the mycothiol biosynthesis pathway. In Mycobacteroides abscessus (strain ATCC 19977 / DSM 44196 / CCUG 20993 / CIP 104536 / JCM 13569 / NCTC 13031 / TMC 1543 / L948) (Mycobacterium abscessus), this protein is 1D-myo-inositol 2-acetamido-2-deoxy-alpha-D-glucopyranoside deacetylase.